Consider the following 244-residue polypeptide: 5-oxoprolinase subunit A (244 aa).

The protein belongs to the LamB/PxpA family. Forms a complex composed of PxpA, PxpB and PxpC.

It catalyses the reaction 5-oxo-L-proline + ATP + 2 H2O = L-glutamate + ADP + phosphate + H(+). Catalyzes the cleavage of 5-oxoproline to form L-glutamate coupled to the hydrolysis of ATP to ADP and inorganic phosphate. This Escherichia coli O139:H28 (strain E24377A / ETEC) protein is 5-oxoprolinase subunit A.